Reading from the N-terminus, the 443-residue chain is MLPVIAIVGRPNVGKSTLFNYLTKSRAALVADVPGVTRDRQYGETTIDSQRLLLVDTGGLVDTENKEVAPLAETQVEQAIDESDCILFLVDAKAGLVPADEIIAERLRKKGKKIFLAVNKADRARAAVVQSDFYKLGFGEPYVIAAASGRGVKDLMTQVLENLPEEKEVIEKEVGIKIAMIGRPNVGKSTLINRLLGEERVIVYDQPGTTRDSIYIPFARNDENYTLIDTAGIRRRAKIQDYVEKFSMIKSLQAMHAADVVIFLLDARQGVTEQDLRLLNRIVEAGVSLIIAVNKWDGLNIEERDNVRNAIDRRMPFVDFARRYFISALHGTGVGKLFRAIQESYQSIQQELTTGQLTRALEKAVAEHEPPLVKGRRIRLRYAHLGARHPLTIVVHGKQTKSLPQSYSRYLANYFRKTFNFIGVPVHIKLKTDPNPYEGQEER.

2 consecutive EngA-type G domains span residues 3–167 (PVIA…PEEK) and 176–349 (IKIA…QSIQ). Residues 9-16 (GRPNVGKS), 56-60 (DTGGL), 119-122 (NKAD), 182-189 (GRPNVGKS), 229-233 (DTAGI), and 294-297 (NKWD) contribute to the GTP site. A KH-like domain is found at 350-434 (QELTTGQLTR…PVHIKLKTDP (85 aa)).

This sequence belongs to the TRAFAC class TrmE-Era-EngA-EngB-Septin-like GTPase superfamily. EngA (Der) GTPase family. Associates with the 50S ribosomal subunit.

In terms of biological role, GTPase that plays an essential role in the late steps of ribosome biogenesis. The protein is GTPase Der of Coxiella burnetii (strain CbuK_Q154) (Coxiella burnetii (strain Q154)).